We begin with the raw amino-acid sequence, 800 residues long: Phenylalanine--tRNA ligase beta subunit (800 aa).

The region spanning 39–154 (TKDIKNLVVG…ESQVPGTDAL (116 aa)) is the tRNA-binding domain. The B5 domain maps to 408 to 483 (AFITPIDITA…RIYGYDDIPS (76 aa)). Mg(2+) contacts are provided by Asp461, Asp467, Glu470, and Glu471. Residues 708 to 800 (PRFPGMSRDI…ALIEQGAVIR (93 aa)) form the FDX-ACB domain.

The protein belongs to the phenylalanyl-tRNA synthetase beta subunit family. Type 1 subfamily. In terms of assembly, tetramer of two alpha and two beta subunits. Mg(2+) serves as cofactor.

It is found in the cytoplasm. It carries out the reaction tRNA(Phe) + L-phenylalanine + ATP = L-phenylalanyl-tRNA(Phe) + AMP + diphosphate + H(+). This Staphylococcus aureus (strain MSSA476) protein is Phenylalanine--tRNA ligase beta subunit.